A 627-amino-acid chain; its full sequence is Neutral endopeptidase (627 aa).

Residues 1–627 (MTRIQDDLFA…RAPENRLKIW (627 aa)) enclose the Peptidase M13 domain. A Zn(2+)-binding site is contributed by H475. The active site involves E476. Residues H479 and E535 each coordinate Zn(2+). The active-site Proton donor is D539.

It belongs to the peptidase M13 family. As to quaternary structure, monomer. Zn(2+) serves as cofactor.

It localises to the cytoplasm. Functionally, endopeptidase with broad substrate specificity for several oligopeptides. The polypeptide is Neutral endopeptidase (pepO) (Lactococcus lactis subsp. cremoris (Streptococcus cremoris)).